The sequence spans 459 residues: NADH oxidase (459 aa).

Residue Asn10 coordinates FAD. The active-site Proton acceptor is His11. The FAD site is built by Ala12, Asp34, Gln35, Cys44, Val81, Ala110, Ser113, Lys143, and Tyr172. Cys44 acts as the Redox-active in catalysis. Cys44 is subject to Cysteine sulfinic acid (-SO2H). The NAD(+) site is built by Ile173, Asp192, Tyr201, and Gly256. Asp294 is an FAD binding site. An NAD(+)-binding site is contributed by Ala310. FAD contacts are provided by Leu311, Ala312, and Ser313. Gly341 contributes to the NAD(+) binding site. Phe439 contacts FAD.

Belongs to the class-III pyridine nucleotide-disulfide oxidoreductase family. The cofactor is FAD.

The protein resides in the secreted. The protein localises to the cell wall. It carries out the reaction 2 NADH + O2 + 2 H(+) = 2 NAD(+) + 2 H2O. Its function is as follows. Catalyzes the four-electron reduction of molecular oxygen to water. Plays a role in redox balance maintenance. May be involved in mediating bacterial adhesion to host cells. May be considered a potential virulence factor. The protein is NADH oxidase of Streptococcus pneumoniae (strain ATCC BAA-255 / R6).